Consider the following 691-residue polypeptide: Elongation factor G (691 aa).

Positions 6-281 (SRYRNIGIMA…GVVDFLPSPI (276 aa)) constitute a tr-type G domain. Residues 15 to 22 (AHIDAGKT), 79 to 83 (DTPGH), and 133 to 136 (NKMD) contribute to the GTP site.

It belongs to the TRAFAC class translation factor GTPase superfamily. Classic translation factor GTPase family. EF-G/EF-2 subfamily.

The protein resides in the cytoplasm. Its function is as follows. Catalyzes the GTP-dependent ribosomal translocation step during translation elongation. During this step, the ribosome changes from the pre-translocational (PRE) to the post-translocational (POST) state as the newly formed A-site-bound peptidyl-tRNA and P-site-bound deacylated tRNA move to the P and E sites, respectively. Catalyzes the coordinated movement of the two tRNA molecules, the mRNA and conformational changes in the ribosome. The sequence is that of Elongation factor G from Wolbachia pipientis subsp. Culex pipiens (strain wPip).